The following is a 286-amino-acid chain: ATP synthase gamma chain (286 aa).

This sequence belongs to the ATPase gamma chain family. As to quaternary structure, F-type ATPases have 2 components, CF(1) - the catalytic core - and CF(0) - the membrane proton channel. CF(1) has five subunits: alpha(3), beta(3), gamma(1), delta(1), epsilon(1). CF(0) has three main subunits: a, b and c.

The protein resides in the cell inner membrane. Functionally, produces ATP from ADP in the presence of a proton gradient across the membrane. The gamma chain is believed to be important in regulating ATPase activity and the flow of protons through the CF(0) complex. The protein is ATP synthase gamma chain of Shewanella baltica (strain OS223).